The primary structure comprises 151 residues: uncharacterized protein (151 aa).

This is an uncharacterized protein from Methanocaldococcus jannaschii (strain ATCC 43067 / DSM 2661 / JAL-1 / JCM 10045 / NBRC 100440) (Methanococcus jannaschii).